A 347-amino-acid polypeptide reads, in one-letter code: Probable arabinogalactan endo-beta-1,4-galactanase A (347 aa).

Positions 1-16 (MLFSYLLATLPLLANA) are cleaved as a signal peptide. Glu-150 serves as the catalytic Proton donor. The active-site Nucleophile is Glu-260.

Belongs to the glycosyl hydrolase 53 family.

It localises to the secreted. It carries out the reaction The enzyme specifically hydrolyzes (1-&gt;4)-beta-D-galactosidic linkages in type I arabinogalactans.. Its function is as follows. Endogalactanase involved in the degradation of plant cell wall polysaccharides, and more particularly of hairy regions of pectin. In Aspergillus oryzae (strain ATCC 42149 / RIB 40) (Yellow koji mold), this protein is Probable arabinogalactan endo-beta-1,4-galactanase A (galA).